Consider the following 342-residue polypeptide: Ketol-acid reductoisomerase (NADP(+)) (342 aa).

Positions 2 to 181 constitute a KARI N-terminal Rossmann domain; sequence VKVYYNGDIK…GGARAGVLET (180 aa). NADP(+)-binding positions include 25-28, Arg-48, Ser-52, and 82-85; these read YGSQ and DEQQ. His-107 is a catalytic residue. An NADP(+)-binding site is contributed by Gly-133. The region spanning 182-327 is the KARI C-terminal knotted domain; sequence TFKEETETDL…RKLREMMPFV (146 aa). Residues Asp-190, Glu-194, Glu-226, and Glu-230 each coordinate Mg(2+). A substrate-binding site is contributed by Ser-251.

It belongs to the ketol-acid reductoisomerase family. It depends on Mg(2+) as a cofactor.

It carries out the reaction (2R)-2,3-dihydroxy-3-methylbutanoate + NADP(+) = (2S)-2-acetolactate + NADPH + H(+). It catalyses the reaction (2R,3R)-2,3-dihydroxy-3-methylpentanoate + NADP(+) = (S)-2-ethyl-2-hydroxy-3-oxobutanoate + NADPH + H(+). Its pathway is amino-acid biosynthesis; L-isoleucine biosynthesis; L-isoleucine from 2-oxobutanoate: step 2/4. It functions in the pathway amino-acid biosynthesis; L-valine biosynthesis; L-valine from pyruvate: step 2/4. Functionally, involved in the biosynthesis of branched-chain amino acids (BCAA). Catalyzes an alkyl-migration followed by a ketol-acid reduction of (S)-2-acetolactate (S2AL) to yield (R)-2,3-dihydroxy-isovalerate. In the isomerase reaction, S2AL is rearranged via a Mg-dependent methyl migration to produce 3-hydroxy-3-methyl-2-ketobutyrate (HMKB). In the reductase reaction, this 2-ketoacid undergoes a metal-dependent reduction by NADPH to yield (R)-2,3-dihydroxy-isovalerate. The chain is Ketol-acid reductoisomerase (NADP(+)) from Bacillus licheniformis (strain ATCC 14580 / DSM 13 / JCM 2505 / CCUG 7422 / NBRC 12200 / NCIMB 9375 / NCTC 10341 / NRRL NRS-1264 / Gibson 46).